The primary structure comprises 863 residues: Paramyosin (863 aa).

Residues 1–18 form a nonhelical region region; the sequence is MSESHVKISRTIIRGTSP. Residues 19–836 are a coiled coil; sequence STVRLESRVR…ERTITIKRTI (818 aa). The nonhelical region stretch occupies residues 837–863; sequence GGPGSRAVSVVREINSVSRGNRATSIM.

The protein belongs to the paramyosin family. In terms of assembly, homodimer or monomer in secreted form.

The protein resides in the cytoplasm. It localises to the myofibril. The protein localises to the secreted. Its function is as follows. Paramyosin is a major structural component of many thick filaments isolated from invertebrate muscles. It is a prominent antigen in human cysticercosis, may have a role as a modulator of the host immune response. It is able to bind collagen and has complement inhibitor activity. The sequence is that of Paramyosin (PMY) from Taenia solium (Pork tapeworm).